Consider the following 311-residue polypeptide: GTP cyclohydrolase FolE2 (311 aa).

This sequence belongs to the GTP cyclohydrolase IV family.

It carries out the reaction GTP + H2O = 7,8-dihydroneopterin 3'-triphosphate + formate + H(+). It participates in cofactor biosynthesis; 7,8-dihydroneopterin triphosphate biosynthesis; 7,8-dihydroneopterin triphosphate from GTP: step 1/1. In terms of biological role, converts GTP to 7,8-dihydroneopterin triphosphate. This chain is GTP cyclohydrolase FolE2, found in Hydrogenovibrio crunogenus (strain DSM 25203 / XCL-2) (Thiomicrospira crunogena).